A 470-amino-acid chain; its full sequence is Argininosuccinate lyase (470 aa).

This sequence belongs to the lyase 1 family. Argininosuccinate lyase subfamily.

Its subcellular location is the cytoplasm. The enzyme catalyses 2-(N(omega)-L-arginino)succinate = fumarate + L-arginine. It participates in amino-acid biosynthesis; L-arginine biosynthesis; L-arginine from L-ornithine and carbamoyl phosphate: step 3/3. This chain is Argininosuccinate lyase, found in Ehrlichia chaffeensis (strain ATCC CRL-10679 / Arkansas).